An 893-amino-acid chain; its full sequence is AP-4 complex accessory subunit RUSC1 (893 aa).

4 disordered regions span residues 31–223, 237–332, 339–358, and 366–444; these read ELRE…GKAE, EKTE…KDRS, SPDT…APPR, and LRSR…RAHA. Polar residues predominate over residues 77–87; the sequence is HGSSIENQQDP. 2 stretches are compositionally biased toward low complexity: residues 95–117 and 149–165; these read SPSD…DESP and PSTC…DSCS. A compositionally biased stretch (polar residues) spans 177-187; sequence SNCNALTTCQD. The span at 237 to 257 shows a compositional bias: basic and acidic residues; that stretch reads EKTEAGWKTIEDSDSGRKTDE. 2 stretches are compositionally biased toward pro residues: residues 373–382 and 390–399; these read QPPPVPPRDP and PPRPPPPPVP. Residues 463 to 598 form an interaction with TRAF6 region; it reads MAEAQSGTGQ…FHAFILGLLN (136 aa). The RUN domain maps to 515-659; that stretch reads DVGHLVLTTL…LTFHLDLLFE (145 aa). The interaction with IKBKG stretch occupies residues 599–665; the sequence is TKQLELWFSS…LLFEHHHHLP (67 aa). Disordered regions lie at residues 700-721 and 751-772; these read RGTS…PAGS and HGTT…TPGR. Low complexity-rich tracts occupy residues 702-714 and 754-770; these read TSGE…STPS and TAEA…QTTP. One can recognise an SH3 domain in the interval 835–893; that stretch reads QADRAVRALCDHTAAGPDQLSFQRGELLRVIATVDEDWLRCGRDGVEGLVPVGYTSLVL.

Associated component of the adapter-like complex 4 (AP-4). Interacts with IKBKG and TRAF6. Interacts with F-actin, acetylated actin, TUBB3, STX1A, KIF5B and KLC1. Phosphorylated on serine residues following nuclear translocation. In terms of processing, polyubiquitinated; polyubiquitination involves TRAF6. As to expression, expressed in brain, brain stem and spinal cord (at protein level).

The protein resides in the cytoplasm. The protein localises to the nucleus. It is found in the cytoskeleton. It localises to the cytoplasmic vesicle. Its subcellular location is the early endosome. The protein resides in the postsynaptic density. The protein localises to the golgi apparatus. Its function is as follows. Associates with the adapter-like complex 4 (AP-4) and may therefore play a role in vesicular trafficking of proteins at the trans-Golgi network. Signaling adapter which plays a role in neuronal differentiation. Involved in regulation of NGF-dependent neurite outgrowth. May play a role in neuronal vesicular trafficking, specifically involving pre-synaptic membrane proteins. Seems to be involved in signaling pathways that are regulated by the prolonged activation of MAPK. Can regulate the polyubiquitination of IKBKG and thus may be involved in regulation of the NF-kappa-B pathway. The polypeptide is AP-4 complex accessory subunit RUSC1 (Mus musculus (Mouse)).